A 372-amino-acid polypeptide reads, in one-letter code: 4-hydroxy-3-methylbut-2-en-1-yl diphosphate synthase (flavodoxin) (372 aa).

4 residues coordinate [4Fe-4S] cluster: C270, C273, C305, and E312.

Belongs to the IspG family. [4Fe-4S] cluster is required as a cofactor.

The enzyme catalyses (2E)-4-hydroxy-3-methylbut-2-enyl diphosphate + oxidized [flavodoxin] + H2O + 2 H(+) = 2-C-methyl-D-erythritol 2,4-cyclic diphosphate + reduced [flavodoxin]. It participates in isoprenoid biosynthesis; isopentenyl diphosphate biosynthesis via DXP pathway; isopentenyl diphosphate from 1-deoxy-D-xylulose 5-phosphate: step 5/6. In terms of biological role, converts 2C-methyl-D-erythritol 2,4-cyclodiphosphate (ME-2,4cPP) into 1-hydroxy-2-methyl-2-(E)-butenyl 4-diphosphate. This chain is 4-hydroxy-3-methylbut-2-en-1-yl diphosphate synthase (flavodoxin), found in Citrobacter koseri (strain ATCC BAA-895 / CDC 4225-83 / SGSC4696).